We begin with the raw amino-acid sequence, 434 residues long: Trigger factor (434 aa).

Residues 160–245 enclose the PPIase FKBP-type domain; that stretch reads GDKVKMNFVG…LTEVQAANLP (86 aa).

The protein belongs to the FKBP-type PPIase family. Tig subfamily.

It is found in the cytoplasm. The enzyme catalyses [protein]-peptidylproline (omega=180) = [protein]-peptidylproline (omega=0). Involved in protein export. Acts as a chaperone by maintaining the newly synthesized protein in an open conformation. Functions as a peptidyl-prolyl cis-trans isomerase. The polypeptide is Trigger factor (Shewanella sp. (strain W3-18-1)).